The chain runs to 842 residues: Microcephalin (842 aa).

Residues 1 to 93 (MAAPILKDVV…AHIDESLFPA (93 aa)) form the BRCT 1 domain. Residues S279, S287, S296, and S333 each carry the phosphoserine modification. T335 bears the Phosphothreonine mark. A compositionally biased stretch (basic residues) spans 346–359 (HSRPRSSSVKRKRV). 3 disordered regions span residues 346-375 (HSRPRSSSVKRKRVSYGFHSPPKEKCKRKR), 418-443 (PDNLKERNSENLPPKSQLPSNPAQFS), and 563-624 (VGLK…PTRR). 2 stretches are compositionally biased toward polar residues: residues 434–443 (QLPSNPAQFS) and 566–582 (KSTQDKGTTSKISNSSE). Positions 586–608 (PSEHEPRSVVDCNVERSAEEKEN) are enriched in basic and acidic residues. BRCT domains lie at 647–737 (SGKG…PFEL) and 758–840 (YRGT…NYLL).

As to quaternary structure, interacts with CDC27 and maybe other components of the APC/C complex. Interacts with histone variant H2AX under DNA damage conditions.

The protein localises to the cytoplasm. It localises to the cytoskeleton. The protein resides in the microtubule organizing center. It is found in the centrosome. In terms of biological role, implicated in chromosome condensation and DNA damage induced cellular responses. May play a role in neurogenesis and regulation of the size of the cerebral cortex. This chain is Microcephalin, found in Macaca fascicularis (Crab-eating macaque).